A 549-amino-acid chain; its full sequence is MASTLFRNIQTHPLLLYPTSFFRRKSSVFYCTVNSTSPTATQEKQQCPRIKVSPQTQSKSLDKLTKDYETIIGIETHVQLSTLTKAFCSCPYNYGAQPNSTICPVCMGLPGALPVLNSKVIEFAVKLGLALNCKLSLNSKFDRKQYFYPDLPKGYQISQFDIPIATSGYVDLDLPVEFGGGHRRFGITRVHMEEDAGKLLHSGGGISGAIVDLNRAGVPLLEIVSEPDMRNGIEAAEYAAELQRVVRYLGVSNGNMQEGSLRCDVNVSIRPIGQSEFGTKVEIKNLNSFSSINRAIDFEISRQVLLHSQGQSDSIVQETRLWEEGAQKTVTMRKKEGLSDYRYFPEPDLPEVVLTEEYVDSIQSSLPELPETKRRRYENMGLSMQDVLFLANDTSVAEFFDATIAQGAQVKLAANWIMGDIAAYMKNEKVSINEIKLTPKELAELIASIKGGIISGKIGKEILFELIAKGGTVKGLIKEKDLVQIVDPAEIEKMVDKVLSENPKQLEQYRAGKTKLQGFFAGQVMKASKGKANPGLLNKILQEKLNAKS.

This sequence belongs to the GatB/GatE family. GatB subfamily. Subunit of the heterotrimeric GatCAB amidotransferase (AdT) complex, composed of A, B and C subunits.

It localises to the mitochondrion. The protein localises to the plastid. It is found in the chloroplast. It carries out the reaction L-glutamyl-tRNA(Gln) + L-glutamine + ATP + H2O = L-glutaminyl-tRNA(Gln) + L-glutamate + ADP + phosphate + H(+). Functionally, allows the formation of correctly charged Gln-tRNA(Gln) through the transamidation of misacylated Glu-tRNA(Gln) in chloroplasts and mitochondria. The reaction takes place in the presence of glutamine and ATP through an activated gamma-phospho-Glu-tRNA(Gln). This Ricinus communis (Castor bean) protein is Glutamyl-tRNA(Gln) amidotransferase subunit B, chloroplastic/mitochondrial.